We begin with the raw amino-acid sequence, 134 residues long: Small ribosomal subunit protein uS9 (134 aa).

The tract at residues 109-134 (DARRTEPHKPSKSSKGPRARRQKSYR) is disordered. Basic residues predominate over residues 118-134 (PSKSSKGPRARRQKSYR).

This sequence belongs to the universal ribosomal protein uS9 family.

The protein is Small ribosomal subunit protein uS9 of Methanococcus vannielii (strain ATCC 35089 / DSM 1224 / JCM 13029 / OCM 148 / SB).